The primary structure comprises 457 residues: Ribulose bisphosphate carboxylase-like protein (457 aa).

The Mg(2+) site is built by K199, D201, and E202. K199 carries the post-translational modification N6-carboxylysine. Residues 426 to 457 (AIAAFGKPAHGQAASPQPSEQASEPDAAGGDS) are disordered.

It belongs to the RuBisCO large chain family. Type IV subfamily. Requires Mg(2+) as cofactor.

Its function is as follows. May be involved in sulfur metabolism and oxidative stress response. Does not show RuBisCO activity. The chain is Ribulose bisphosphate carboxylase-like protein from Allochromatium vinosum (strain ATCC 17899 / DSM 180 / NBRC 103801 / NCIMB 10441 / D) (Chromatium vinosum).